A 602-amino-acid polypeptide reads, in one-letter code: Aryl hydrocarbon receptor protein 1 (602 aa).

Residues 1-2 (MY) constitute a propeptide that is removed on maturation. Residues 1 to 12 (MYASKRRQRNFK) are compositionally biased toward basic residues. The interval 1–28 (MYASKRRQRNFKRVRDPPKQLTNTNPSK) is disordered. 2 consecutive short sequence motifs (nuclear localization signal) follow at residues 5–8 (KRRQ) and 28–33 (KRHRER). The bHLH domain maps to 18-71 (PKQLTNTNPSKRHRERLNGELETVAMLLPYDSSTISRLDKLSVLRLAVSFLQCK). 3 required for maintaining the overall integrity of the AHR:ARNT heterodimer and its transcriptional activity regions span residues 41–73 (VAMLLPYDSSTISRLDKLSVLRLAVSFLQCKAH), 133–141 (SLKSLGGFI), and 266–268 (ICV). Positions 55–63 (LDKLSVLRL) match the Nuclear export signal motif. In terms of domain architecture, PAS spans 126-196 (ESNFEEISLK…QQLDSNFHIP (71 aa)). The segment at 440 to 467 (STSNSLFPSVPVPTPTTTKANRRRKENS) is disordered.

Interacts with daf-21/hsp90. Interacts with aha-1. Expressed in many distinct neuronal cells including RMED, RMEV, RMEL and RMER. Functions in URX neurons to promote aggregation behavior.

The protein resides in the nucleus. Its function is as follows. Probable ligand-activated transcriptional activator. Acts as a transcriptional regulator in GABAergic motor neuron cell fate specification and development. Promotes cell-type-specific expression of guanylate cyclase genes that have key roles in aggregation behavior and hyperoxia avoidance. Has no role in carbon dioxide avoidance. This Caenorhabditis elegans protein is Aryl hydrocarbon receptor protein 1.